Reading from the N-terminus, the 501-residue chain is L-arabinose isomerase (501 aa).

Residues glutamate 306, glutamate 333, histidine 350, and histidine 450 each coordinate Mn(2+).

It belongs to the arabinose isomerase family. As to quaternary structure, homohexamer. Mn(2+) serves as cofactor.

It catalyses the reaction beta-L-arabinopyranose = L-ribulose. It participates in carbohydrate degradation; L-arabinose degradation via L-ribulose; D-xylulose 5-phosphate from L-arabinose (bacterial route): step 1/3. Catalyzes the conversion of L-arabinose to L-ribulose. The sequence is that of L-arabinose isomerase from Pectobacterium atrosepticum (strain SCRI 1043 / ATCC BAA-672) (Erwinia carotovora subsp. atroseptica).